Reading from the N-terminus, the 165-residue chain is Fibrinogen-binding protein (165 aa).

The signal sequence occupies residues Met-1–Ala-29.

In terms of assembly, interacts with host fibrinogen alpha chain/FGA. Interacts with host complement protein C3.

The protein resides in the secreted. Functionally, extracellular fibrinogen-binding protein that plays an important role in virulence. By interacting with the alpha chain of fibrinogen and its derivative fibrin, enhances a non-functional interaction between fibrinogen and platelets and is responsible for repression of fibrinogen-dependent platelet aggregation. In addition, assembles a fibrinogen protective shield around the bacteria which results in impaired phagocytic clearance by the host. Mechanistically, interacts with host complement C3b deposited on the surface of the bacterium via its C-terminal and then recruits fibrinogen via its N-terminal. In Staphylococcus aureus (strain Newman), this protein is Fibrinogen-binding protein (fib).